Consider the following 201-residue polypeptide: NADH-quinone oxidoreductase subunit C (201 aa).

Belongs to the complex I 30 kDa subunit family. As to quaternary structure, NDH-1 is composed of 14 different subunits. Subunits NuoB, C, D, E, F, and G constitute the peripheral sector of the complex.

It localises to the cell inner membrane. The catalysed reaction is a quinone + NADH + 5 H(+)(in) = a quinol + NAD(+) + 4 H(+)(out). In terms of biological role, NDH-1 shuttles electrons from NADH, via FMN and iron-sulfur (Fe-S) centers, to quinones in the respiratory chain. The immediate electron acceptor for the enzyme in this species is believed to be ubiquinone. Couples the redox reaction to proton translocation (for every two electrons transferred, four hydrogen ions are translocated across the cytoplasmic membrane), and thus conserves the redox energy in a proton gradient. The polypeptide is NADH-quinone oxidoreductase subunit C (Sinorhizobium medicae (strain WSM419) (Ensifer medicae)).